The sequence spans 128 residues: Small ribosomal subunit protein uS9 (128 aa).

This sequence belongs to the universal ribosomal protein uS9 family.

The chain is Small ribosomal subunit protein uS9 from Christiangramia forsetii (strain DSM 17595 / CGMCC 1.15422 / KT0803) (Gramella forsetii).